The chain runs to 154 residues: Endoribonuclease YbeY (154 aa).

Zn(2+) is bound by residues H113, H117, and H123.

Belongs to the endoribonuclease YbeY family. Requires Zn(2+) as cofactor.

It localises to the cytoplasm. Its function is as follows. Single strand-specific metallo-endoribonuclease involved in late-stage 70S ribosome quality control and in maturation of the 3' terminus of the 16S rRNA. This chain is Endoribonuclease YbeY, found in Vibrio vulnificus (strain YJ016).